Here is a 238-residue protein sequence, read N- to C-terminus: UPF0280 protein Msm_0088 (238 aa).

It belongs to the UPF0280 family.

This is UPF0280 protein Msm_0088 from Methanobrevibacter smithii (strain ATCC 35061 / DSM 861 / OCM 144 / PS).